The following is a 163-amino-acid chain: ATP synthase subunit b 1 (163 aa).

Residues Phe-5–Leu-25 traverse the membrane as a helical segment.

It belongs to the ATPase B chain family. In terms of assembly, F-type ATPases have 2 components, F(1) - the catalytic core - and F(0) - the membrane proton channel. F(1) has five subunits: alpha(3), beta(3), gamma(1), delta(1), epsilon(1). F(0) has three main subunits: a(1), b(2) and c(10-14). The alpha and beta chains form an alternating ring which encloses part of the gamma chain. F(1) is attached to F(0) by a central stalk formed by the gamma and epsilon chains, while a peripheral stalk is formed by the delta and b chains.

Its subcellular location is the cell inner membrane. In terms of biological role, f(1)F(0) ATP synthase produces ATP from ADP in the presence of a proton or sodium gradient. F-type ATPases consist of two structural domains, F(1) containing the extramembraneous catalytic core and F(0) containing the membrane proton channel, linked together by a central stalk and a peripheral stalk. During catalysis, ATP synthesis in the catalytic domain of F(1) is coupled via a rotary mechanism of the central stalk subunits to proton translocation. Its function is as follows. Component of the F(0) channel, it forms part of the peripheral stalk, linking F(1) to F(0). This is ATP synthase subunit b 1 from Rhizobium leguminosarum bv. trifolii (strain WSM2304).